The primary structure comprises 48 residues: 4-carboxymuconolactone decarboxylase (48 aa).

Belongs to the carboxymuconolactone decarboxylase family.

It catalyses the reaction (R)-2-(carboxymethyl)-5-oxo-2,5-dihydro-2-furoate + H(+) = (4,5-dihydro-5-oxofuran-2-yl)-acetate + CO2. The protein operates within aromatic compound metabolism; beta-ketoadipate pathway; 5-oxo-4,5-dihydro-2-furylacetate from 3-carboxy-cis,cis-muconate: step 2/2. In Pseudomonas putida (Arthrobacter siderocapsulatus), this protein is 4-carboxymuconolactone decarboxylase.